Consider the following 166-residue polypeptide: Spiderine-1b (166 aa).

A signal peptide spans 1–18 (MKFALVLLGICAFYLVNA). A propeptide spans 19–58 (TGDLETELEASELQELQEALDLIGETSLESLEAEELEEAR) (removed in mature form). The segment at 59-99 (KFKWGKLFSAAKKLYKKGKKLSKNKNFKKALKFGKQLAKNL) is linear cationic cytotoxin domain. In terms of domain architecture, Oxytoxin-type inhibitor cystine knot (ICK) spans 113–166 (NNKCWAIGTTCSDDCDCCPEHHCHCPAGKWLPGLFRCTCQVTESDKVNKCPPAE). Cystine bridges form between C116–C130, C123–C135, C127–C162, C129–C151, and C137–C149.

It belongs to the spiderine family. Cationic/spiderine subfamily. As to expression, expressed by the venom gland.

The protein localises to the secreted. Functionally, has antimicrobial, insecticidal, cytolytic and cytotoxic activity. The polypeptide is Spiderine-1b (Oxyopes takobius (Lynx spider)).